Consider the following 116-residue polypeptide: Protein Rev (116 aa).

S5 and S8 each carry phosphoserine; by host CK2. The homomultimerization stretch occupies residues 18 to 26 (LIKFLYQSN). A disordered region spans residues 25–49 (SNPPPSLEGTRQARRNRRRRWRERQ). The short motif at 34–50 (TRQARRNRRRRWRERQR) is the Nuclear localization signal and RNA-binding (RRE) element. The segment covering 36–47 (QARRNRRRRWRE) has biased composition (basic residues). The Nuclear export signal and binding to XPO1 signature appears at 73–84 (LPLPPLEKLTLD). S92 and S99 each carry phosphoserine; by host. Residues 92–116 (SGTQGVGSPQILVESPAILEPGTKE) are disordered.

It belongs to the HIV-1 REV protein family. In terms of assembly, homomultimer; when bound to the RRE. Multimeric assembly is essential for activity and may involve XPO1. Binds to human KPNB1, XPO1, TNPO1, RANBP5 and IPO7. Interacts with the viral Integrase. Interacts with human KHDRBS1. Interacts with human NAP1; this interaction decreases Rev multimerization and stimulates its activity. Interacts with human DEAD-box helicases DDX3 and DDX24; these interactions may serve for viral RNA export to the cytoplasm and packaging, respectively. Interacts with human PSIP1; this interaction may inhibit HIV-1 DNA integration by promoting dissociation of the Integrase-LEDGF/p75 complex. Asymmetrically arginine dimethylated at one site by host PRMT6. Methylation impairs the RNA-binding activity and export of viral RNA from the nucleus to the cytoplasm. In terms of processing, phosphorylated by protein kinase CK2. Presence of, and maybe binding to the N-terminus of the regulatory beta subunit of CK2 is necessary for CK2-mediated Rev's phosphorylation.

The protein localises to the host nucleus. Its subcellular location is the host nucleolus. The protein resides in the host cytoplasm. In terms of biological role, escorts unspliced or incompletely spliced viral pre-mRNAs (late transcripts) out of the nucleus of infected cells. These pre-mRNAs carry a recognition sequence called Rev responsive element (RRE) located in the env gene, that is not present in fully spliced viral mRNAs (early transcripts). This function is essential since most viral proteins are translated from unspliced or partially spliced pre-mRNAs which cannot exit the nucleus by the pathway used by fully processed cellular mRNAs. Rev itself is translated from a fully spliced mRNA that readily exits the nucleus. Rev's nuclear localization signal (NLS) binds directly to KPNB1/Importin beta-1 without previous binding to KPNA1/Importin alpha-1. KPNB1 binds to the GDP bound form of RAN (Ran-GDP) and targets Rev to the nucleus. In the nucleus, the conversion from Ran-GDP to Ran-GTP dissociates Rev from KPNB1 and allows Rev's binding to the RRE in viral pre-mRNAs. Rev multimerization on the RRE via cooperative assembly exposes its nuclear export signal (NES) to the surface. Rev can then form a complex with XPO1/CRM1 and Ran-GTP, leading to nuclear export of the complex. Conversion from Ran-GTP to Ran-GDP mediates dissociation of the Rev/RRE/XPO1/RAN complex, so that Rev can return to the nucleus for a subsequent round of export. Beside KPNB1, also seems to interact with TNPO1/Transportin-1, RANBP5/IPO5 and IPO7/RANBP7 for nuclear import. The nucleoporin-like HRB/RIP is an essential cofactor that probably indirectly interacts with Rev to release HIV RNAs from the perinuclear region to the cytoplasm. The polypeptide is Protein Rev (Human immunodeficiency virus type 1 group M subtype B (strain 89.6) (HIV-1)).